A 253-amino-acid chain; its full sequence is Probable transcriptional regulatory protein RC0681 (253 aa).

Residues 1–21 (MAGHSKFKNIQHRKGAQDKKR) form a disordered region.

It belongs to the TACO1 family.

It is found in the cytoplasm. The polypeptide is Probable transcriptional regulatory protein RC0681 (Rickettsia conorii (strain ATCC VR-613 / Malish 7)).